The sequence spans 178 residues: uncharacterized protein (178 aa).

The next 5 membrane-spanning stretches (helical) occupy residues 13-33, 48-68, 80-100, 115-135, and 155-175; these read GIVL…FFMP, MLNA…LIMI, ILAA…YHSI, IYFF…PLAL, and WTMP…LMIS.

The protein localises to the cell membrane. This is an uncharacterized protein from Bacillus subtilis (strain 168).